The following is a 597-amino-acid chain: MTNPGPSRHLFADVLARVHAVCSALVEEGALPAGLDLSRIVVEPPREASHGDMATNAAMVLAKGAKSKPRDLAEKVAAKLRADGLIDKAEIAGPGFINLTLKPQVWSDALRTVLREGDGYGRSAIGAGEKVNVEYVSANPTGPMHVGHCRGAVFGDALASLLSFAGYGVTREYYINDAGAQVDVLARSAYLRYREALGQDIGEIPEGLYPGDYLKPVGQALAAEHGDSLLKAPEAEWLPVARAKAIAMMMEMIKGDLAALNIQHEVFFSERSLIEGGSDRVAATIDFLRAKGDVYEGRLPPPKGAPVEDYEDREQTLFRATAYGDDIDRPLKKSDGGYTYFASDIAYHKTKFDRGFLNMVDVWGADHGGYIKRVQAAIKAVTSGKATLDVKIVQLVKLLRNGEPVKMSKRSGDFVTLREVVDEVGSDAVRFMMLFRKNDAVLDFDLAKVIEQSKDNPVFYVQYGHARGFSIFRNAREAFPDLPEDASKRAAFLAAAAVERLTDPAELGLLRRLALYPRTVEAAALAHEPHRIAFYLYDLASEFHALWTKGRDMPHLRFIINNDAVITRARLALVQGVVSVLASGLAVLGVHAPNEMR.

The 'HIGH' region motif lies at 138-148 (ANPTGPMHVGH).

The protein belongs to the class-I aminoacyl-tRNA synthetase family. In terms of assembly, monomer.

It is found in the cytoplasm. It carries out the reaction tRNA(Arg) + L-arginine + ATP = L-arginyl-tRNA(Arg) + AMP + diphosphate. The chain is Arginine--tRNA ligase from Nitrobacter hamburgensis (strain DSM 10229 / NCIMB 13809 / X14).